The chain runs to 426 residues: Enolase (426 aa).

Gln162 contacts (2R)-2-phosphoglycerate. Glu204 functions as the Proton donor in the catalytic mechanism. Mg(2+) is bound by residues Asp241, Glu286, and Asp313. Positions 338, 367, 368, and 389 each coordinate (2R)-2-phosphoglycerate. The active-site Proton acceptor is the Lys338.

This sequence belongs to the enolase family. Mg(2+) serves as cofactor.

The protein resides in the cytoplasm. It localises to the secreted. It is found in the cell surface. The enzyme catalyses (2R)-2-phosphoglycerate = phosphoenolpyruvate + H2O. Its pathway is carbohydrate degradation; glycolysis; pyruvate from D-glyceraldehyde 3-phosphate: step 4/5. Its function is as follows. Catalyzes the reversible conversion of 2-phosphoglycerate (2-PG) into phosphoenolpyruvate (PEP). It is essential for the degradation of carbohydrates via glycolysis. This Aliarcobacter butzleri (strain RM4018) (Arcobacter butzleri) protein is Enolase.